A 468-amino-acid polypeptide reads, in one-letter code: Heparan-sulfate 6-O-sulfotransferase 2 (468 aa).

Over 1-9 (MDGKSNYSR) the chain is Cytoplasmic. The helical; Signal-anchor for type II membrane protein transmembrane segment at 10-30 (LLIALLMILFFGGIVLQYICS) threads the bilayer. The Lumenal portion of the chain corresponds to 31 to 468 (TSDWQLLHLA…DYLENVEQWR (438 aa)). A glycan (N-linked (GlcNAc...) asparagine) is linked at Asn-79. Residue 103 to 111 (HIQKTGGTT) participates in 3'-phosphoadenylyl sulfate binding. Residues 133–134 (KK), Arg-150, Trp-155, and His-160 contribute to the substrate site. The Proton acceptor role is filled by His-160. Residues Arg-197 and Ser-205 each coordinate 3'-phosphoadenylyl sulfate. Residues His-209 and Trp-216 each coordinate substrate. A glycan (N-linked (GlcNAc...) asparagine) is linked at Asn-276. Residue 329-331 (TQL) participates in 3'-phosphoadenylyl sulfate binding. N-linked (GlcNAc...) asparagine glycosylation is present at Asn-332. 335–336 (RA) contributes to the 3'-phosphoadenylyl sulfate binding site. A disordered region spans residues 409–447 (FKPTKEPPMTEQSPAFAEEKQADAERTLESETEGQVEEN). The span at 425-437 (AEEKQADAERTLE) shows a compositional bias: basic and acidic residues. Residues 438-447 (SETEGQVEEN) are compositionally biased toward acidic residues.

The protein belongs to the sulfotransferase 6 family. As to expression, expressed ubiquitously during gastrulation. During early somitogenesis, strong expression in head and presumptive brain. During mid-somitogenesis, strong expression in eye, hindbrain and somitic boundaries and weak expression in tail bud. During late somitogenesis, strong expression in eye, hindbrain, branchial arch primordia, spinal cord and ventral medial somites. At 24 hours post-fertilization (hpf), strong expression throughout the head, with expression receeding from the trunk spinal cord, ventral medial somites and somitic boundaries; expressed in cells surrounding vascular structures of the dorsal aorta and caudal vein in the tail. At 36 hpf, expressed in lens, optic stalk, hindbrain and pectoral fin. At 48 hpf, expressed in eye, brain, otic vesicle and branchial arches.

Its subcellular location is the membrane. It carries out the reaction alpha-D-glucosaminyl-[heparan sulfate](n) + 3'-phosphoadenylyl sulfate = 6-sulfo-alpha-D-glucosaminyl-[heparan sulfate](n) + adenosine 3',5'-bisphosphate + H(+). Functionally, 6-O-sulfation enzyme which catalyzes the transfer of sulfate from 3'-phosphoadenosine 5'-phosphosulfate (PAPS) to position 6 of the N-sulfoglucosamine residue (GlcNS) of heparan sulfate. Required for muscle development and angiogenesis. The sequence is that of Heparan-sulfate 6-O-sulfotransferase 2 (hs6st2) from Danio rerio (Zebrafish).